Reading from the N-terminus, the 178-residue chain is Mediator of RNA polymerase II transcription subunit 28 (178 aa).

The interval Met1–Gly25 is disordered. Positions Gln109–Asp145 form a coiled coil.

Belongs to the Mediator complex subunit 28 family. As to quaternary structure, component of the Mediator complex, which is composed of MED1, MED4, MED6, MED7, MED8, MED9, MED10, MED11, MED12, MED13, MED13L, MED14, MED15, MED16, MED17, MED18, MED19, MED20, MED21, MED22, MED23, MED24, MED25, MED26, MED27, MED29, MED30, MED31, CCNC, CDK8 and CDC2L6/CDK11. The MED12, MED13, CCNC and CDK8 subunits form a distinct module termed the CDK8 module. Mediator containing the CDK8 module is less active than Mediator lacking this module in supporting transcriptional activation. Individual preparations of the Mediator complex lacking one or more distinct subunits have been variously termed ARC, CRSP, DRIP, PC2, SMCC and TRAP. Forms a ternary complex with NF2/merlin and GRB2. Binds to actin.

It localises to the nucleus. The protein localises to the cytoplasm. The protein resides in the membrane. In terms of biological role, component of the Mediator complex, a coactivator involved in the regulated transcription of nearly all RNA polymerase II-dependent genes. Mediator functions as a bridge to convey information from gene-specific regulatory proteins to the basal RNA polymerase II transcription machinery. Mediator is recruited to promoters by direct interactions with regulatory proteins and serves as a scaffold for the assembly of a functional preinitiation complex with RNA polymerase II and the general transcription factors. May be part of a complex containing NF2/merlin that participates in cellular signaling to the actin cytoskeleton downstream of tyrosine kinase signaling pathways. In Bos taurus (Bovine), this protein is Mediator of RNA polymerase II transcription subunit 28 (MED28).